A 419-amino-acid polypeptide reads, in one-letter code: Octopressin receptor (419 aa).

The Extracellular portion of the chain corresponds to 1–37 (MENFTEENLHPWITTTTRVYNNVTIFPQYDDELGKFE). N-linked (GlcNAc...) asparagine glycans are attached at residues N3 and N22. Residues 38–58 (IMVLCILCFMALFGNAVVLIV) traverse the membrane as a helical segment. Topologically, residues 59–80 (LRIKKTTLTRMQLLIVYLSVTD) are cytoplasmic. A helical transmembrane segment spans residues 81–101 (ISVALFHILPTIILKINVYFL). The Extracellular segment spans residues 102 to 108 (GDISACR). A disulfide bridge connects residues C107 and C182. A helical membrane pass occupies residues 109-129 (VYQFITVAELYASSFVLIVTA). The Cytoplasmic segment spans residues 130 to 153 (LDRYISICHPLAAHMWTNRRVHMT). Residues 154–174 (TALALFLALMCSLPQLDAVLV) traverse the membrane as a helical segment. Topologically, residues 175–192 (DFHGGKLCRPNLTTELAN) are extracellular. The N-linked (GlcNAc...) asparagine glycan is linked to N185. A helical membrane pass occupies residues 193-213 (IAYSWWAFCSVFFVPLLLLIF). The Cytoplasmic segment spans residues 214–292 (FYGRICFVVW…VSKSKIKTIK (79 aa)). Residues 253–274 (SQTSSENRVKNYSDARDKDSSR) are disordered. The segment covering 259–274 (NRVKNYSDARDKDSSR) has biased composition (basic and acidic residues). A helical membrane pass occupies residues 293-313 (LTFSVVACFIICYTPFFTVLM). The Extracellular portion of the chain corresponds to 314 to 329 (ARTYDAELSSAQTPAL). A helical membrane pass occupies residues 330–350 (VILSLLPSLNSCTNPWIYLAF). Residues 351–419 (SGKVWCRQQS…TTALMSSSPC (69 aa)) are Cytoplasmic-facing.

Belongs to the G-protein coupled receptor 1 family. Vasopressin/oxytocin receptor subfamily. Present in the nervous system and peripheral tissues.

It localises to the cell membrane. Functionally, acts as a receptor for octopressin. This Octopus vulgaris (Common octopus) protein is Octopressin receptor.